We begin with the raw amino-acid sequence, 828 residues long: MSGWRKIYYKLLNLPLKLLVKSKVIPADPVSELGLDPSRPILYVLPYNSKADLLTLRAQCLAQDLPDPLIPLEIDGVQLPSHVFIENGPRVFRYYVPKQESVKLFHDYLDLHRNNPALDIQMLPVSVMFGRSPGREGHGTPHLRVLNGVQKFFAVLWLGRDSFVRFSTTVSLRRMASEHGTDKTIAHKLARVARMHFSRQRLAAVGPSLPARQDLFKKLLASKAIEKAVADEARSKKISHEKAQQNAITLMEEIAANFSYEAVRLSDRVLSWTWNRLYQGINVHNAERVRQLAQDGHEIVYVPCHRSHMDYLLLSYVLYHQGLVPPHIAAGINLNFWPAGPIFRRLGAFFIRRTFKGNKLYSTVFREYLGELFTRGYSVEYFVEGGRSRTGRLLEPKTGTLSMTIQAMLRGGTRPITLVPIYIGYEHVMEVGTYAKELRGAIKEKENLLQMLRGLRKLRNLGQGYVNFGEPLPLTTYLNTHVPQWRDAIDPIEAQRPSWLTPAVNDLANQIMVRINNAAAANAMNLCSTALLASRQRSLTREQLLEQLDCYLQLMRNAPYAKDTTVPDKTPEELLNHALNMNKFEVEKDTIGDIIILPREQAVLMTYYRNNIQHLLILPSLIASMVMYHRRITRTELLHKISMIYPMLKAELFLHYSKEQLPETLDTLIDELARQQLICDKGSELVLNPARIRPLQLLAAGVRETLQRYAITLSLLSATPSINRGALEKESRIMAQRLSVLHGINAPEFFDKAVFSTLVATLREEGYISDSGDAIQEHTLEVYNMLSALMTPEVKLTIESVSMPAETSNQPEAPETPETPEPEGKTES.

An HXXXXD motif motif is present at residues 304 to 309; sequence CHRSHM. Residues 802–828 form a disordered region; the sequence is SMPAETSNQPEAPETPETPEPEGKTES.

Belongs to the GPAT/DAPAT family.

Its subcellular location is the cell inner membrane. The catalysed reaction is sn-glycerol 3-phosphate + an acyl-CoA = a 1-acyl-sn-glycero-3-phosphate + CoA. Its pathway is phospholipid metabolism; CDP-diacylglycerol biosynthesis; CDP-diacylglycerol from sn-glycerol 3-phosphate: step 1/3. This is Glycerol-3-phosphate acyltransferase from Yersinia pseudotuberculosis serotype O:3 (strain YPIII).